We begin with the raw amino-acid sequence, 1567 residues long: Myosin-2A (1567 aa).

Positions 4–57 constitute a Myosin N-terminal SH3-like domain; it reads EVGTRCWYPSKEQGWIGAEVTKNDLKDGTYFMELTLEDNEVVNVETKDLTNEKD. A Myosin motor domain is found at 70 to 786; that stretch reads ESTEDLTTLS…MLAYFEKLRS (717 aa). 164-171 provides a ligand contact to ATP; sequence GESGAGKT. Positions 446-526 are actin-binding; sequence FIGVLDIYGF…LGILSLLDEE (81 aa). The interval 619–640 is disordered; that stretch reads EEAKKNAASQDQKQLKKPTPIR. 6 IQ domains span residues 789–818, 812–836, 837–859, 860–884, 885–907, and 908–937; these read MNSA…SLSL, MKAS…EYEL, EQHA…YISG, VISS…QSKY, ESNA…AYES, and KRRD…DAKS. Positions 947 to 1091 form a coiled coil; the sequence is KLENKVIQLT…LAHLQTSIAL (145 aa). The tract at residues 1092 to 1567 is non alpha-helical, tail domain; that stretch reads GTVTTNTNIV…VAQQVTVPDA (476 aa). The 276-residue stretch at 1230-1505 folds into the Dilute domain; that stretch reads AQVLTTIQKV…LKYVADIVKK (276 aa).

Belongs to the TRAFAC class myosin-kinesin ATPase superfamily. Myosin family. As to quaternary structure, homodimer. Interacts with calmodulin (CMD1) and the myosin light chain MLC1 through its IQ repeats.

Myosin heavy chain that is required for the cell cycle-regulated transport of various organelles and proteins for their segregation. Functions by binding with its tail domain to receptor proteins on organelles and exerting force with its N-terminal motor domain against actin filaments, thereby transporting its cargo along polarized actin cables. This is Myosin-2A (MYO2A) from Naumovozyma castellii (Yeast).